An 861-amino-acid polypeptide reads, in one-letter code: Bifunctional uridylyltransferase/uridylyl-removing enzyme (861 aa).

Positions 1–321 (MKNDNRIIKN…VYHQKQKIIR (321 aa)) are uridylyltransferase. The segment at 322-678 (LDDEFQLSNR…IMPHHSQGGT (357 aa)) is uridylyl-removing. Residues 440–562 (VDQHTLFVIR…LPHAKYLDYL (123 aa)) form the HD domain. ACT domains are found at residues 679–760 (EVFI…AVSR) and 788–861 (QLFL…KSKY).

Belongs to the GlnD family. It depends on Mg(2+) as a cofactor.

It carries out the reaction [protein-PII]-L-tyrosine + UTP = [protein-PII]-uridylyl-L-tyrosine + diphosphate. The catalysed reaction is [protein-PII]-uridylyl-L-tyrosine + H2O = [protein-PII]-L-tyrosine + UMP + H(+). With respect to regulation, uridylyltransferase (UTase) activity is inhibited by glutamine, while glutamine activates uridylyl-removing (UR) activity. Modifies, by uridylylation and deuridylylation, the PII regulatory proteins (GlnB and homologs), in response to the nitrogen status of the cell that GlnD senses through the glutamine level. Under low glutamine levels, catalyzes the conversion of the PII proteins and UTP to PII-UMP and PPi, while under higher glutamine levels, GlnD hydrolyzes PII-UMP to PII and UMP (deuridylylation). Thus, controls uridylylation state and activity of the PII proteins, and plays an important role in the regulation of nitrogen assimilation and metabolism. The protein is Bifunctional uridylyltransferase/uridylyl-removing enzyme of Legionella pneumophila (strain Lens).